An 83-amino-acid chain; its full sequence is MVTIRLARGGSKKRPFYHLTVTNSRNARDGRFVERIGFFNPVATGGEVRLSVDQERATYWLAQGAQPSERVAQLLKDAAKANA.

Belongs to the bacterial ribosomal protein bS16 family.

In Pseudomonas aeruginosa (strain UCBPP-PA14), this protein is Small ribosomal subunit protein bS16.